The primary structure comprises 369 residues: UDP-N-acetylglucosamine--N-acetylmuramyl-(pentapeptide) pyrophosphoryl-undecaprenol N-acetylglucosamine transferase (369 aa).

UDP-N-acetyl-alpha-D-glucosamine contacts are provided by residues 10 to 12 (TGG), N124, S195, I252, and Q297.

Belongs to the glycosyltransferase 28 family. MurG subfamily.

It localises to the cell membrane. The catalysed reaction is Mur2Ac(oyl-L-Ala-gamma-D-Glu-L-Lys-D-Ala-D-Ala)-di-trans,octa-cis-undecaprenyl diphosphate + UDP-N-acetyl-alpha-D-glucosamine = beta-D-GlcNAc-(1-&gt;4)-Mur2Ac(oyl-L-Ala-gamma-D-Glu-L-Lys-D-Ala-D-Ala)-di-trans,octa-cis-undecaprenyl diphosphate + UDP + H(+). It participates in cell wall biogenesis; peptidoglycan biosynthesis. Its function is as follows. Cell wall formation. Catalyzes the transfer of a GlcNAc subunit on undecaprenyl-pyrophosphoryl-MurNAc-pentapeptide (lipid intermediate I) to form undecaprenyl-pyrophosphoryl-MurNAc-(pentapeptide)GlcNAc (lipid intermediate II). The chain is UDP-N-acetylglucosamine--N-acetylmuramyl-(pentapeptide) pyrophosphoryl-undecaprenol N-acetylglucosamine transferase from Leuconostoc citreum (strain KM20).